The following is a 506-amino-acid chain: Maturase K (506 aa).

Belongs to the intron maturase 2 family. MatK subfamily.

It localises to the plastid. It is found in the chloroplast. Usually encoded in the trnK tRNA gene intron. Probably assists in splicing its own and other chloroplast group II introns. This Trifolium incarnatum (Crimson clover) protein is Maturase K.